Consider the following 399-residue polypeptide: Elongation factor Tu (399 aa).

The region spanning 10–209 (KPHVNIGTIG…EVDRYIPTPE (200 aa)) is the tr-type G domain. Positions 19–26 (GHVDHGKT) are G1. 19-26 (GHVDHGKT) is a GTP binding site. Threonine 26 contributes to the Mg(2+) binding site. Residues 60-64 (GITIA) form a G2 region. Residues 81–84 (DCPG) are G3. GTP is bound by residues 81–85 (DCPGH) and 136–139 (NKED). Positions 136–139 (NKED) are G4. Residues 174–176 (SAL) form a G5 region.

It belongs to the TRAFAC class translation factor GTPase superfamily. Classic translation factor GTPase family. EF-Tu/EF-1A subfamily. In terms of assembly, monomer.

The protein resides in the cytoplasm. The enzyme catalyses GTP + H2O = GDP + phosphate + H(+). Functionally, GTP hydrolase that promotes the GTP-dependent binding of aminoacyl-tRNA to the A-site of ribosomes during protein biosynthesis. The polypeptide is Elongation factor Tu (Wolinella succinogenes (strain ATCC 29543 / DSM 1740 / CCUG 13145 / JCM 31913 / LMG 7466 / NCTC 11488 / FDC 602W) (Vibrio succinogenes)).